The following is a 109-amino-acid chain: MDKSKRPFIKSKRSFRRRLPPIKSGDRIDYRNISLISRFLSEQGKILSKRVHRFTLKQQRLITLAIKQARILSLLPFTKRKGFERSESTPRTNALKPRNKNKQNNQTQF.

The interval 82–109 (GFERSESTPRTNALKPRNKNKQNNQTQF) is disordered.

This sequence belongs to the bacterial ribosomal protein bS18 family. In terms of assembly, part of the 30S ribosomal subunit.

It is found in the plastid. This chain is Small ribosomal subunit protein bS18c, found in Cuscuta reflexa (Southern Asian dodder).